Reading from the N-terminus, the 389-residue chain is Na(+)/H(+) antiporter NhaA (389 aa).

Transmembrane regions (helical) follow at residues 14–34 (AGGI…NSPL), 59–79 (LLLW…GLEV), 95–115 (SLPS…YLLF), 124–144 (AGWA…MALL), 154–174 (VFLL…IALF), 177–197 (SDLS…LVGL), 213–233 (LILW…GVII), 261–281 (FLIL…NMSL), 290–310 (IGIA…FSFI), 328–348 (IAPV…IASL), and 363–383 (LGTL…LSKV).

Belongs to the NhaA Na(+)/H(+) (TC 2.A.33) antiporter family.

The protein resides in the cell inner membrane. It carries out the reaction Na(+)(in) + 2 H(+)(out) = Na(+)(out) + 2 H(+)(in). Its function is as follows. Na(+)/H(+) antiporter that extrudes sodium in exchange for external protons. The protein is Na(+)/H(+) antiporter NhaA of Shewanella sp. (strain W3-18-1).